The chain runs to 143 residues: High mobility group protein B (143 aa).

The segment at 1–22 (MSKAASQYATLEDLPSKPKRPQ) is disordered. Residues 18–86 (PKRPQTGFFI…TYDKQNDQWK (69 aa)) constitute a DNA-binding region (HMG box). A70 carries the blocked amino end (Ala) modification. Composition is skewed to basic and acidic residues over residues 100 to 120 (AKKA…ELEK) and 131 to 143 (AKKD…AKKK). A disordered region spans residues 100 to 143 (AKKALKEKTKKSKAAEKELEKSKKKAPAAAPAKKDDKKAPAKKK).

The protein resides in the nucleus. Its subcellular location is the chromosome. In Tetrahymena thermophila, this protein is High mobility group protein B.